We begin with the raw amino-acid sequence, 365 residues long: Palmitoyltransferase ZDHHC20 (365 aa).

Residues 1–14 are Cytoplasmic-facing; that stretch reads MAPWTLWRCCQRVV. Residues 15 to 35 form a helical membrane-spanning segment; it reads GWVPVLFITFVVVWSYYAYVV. The Lumenal segment spans residues 36–53; sequence ELCVFTIFGNEENGKTVV. A helical membrane pass occupies residues 54-74; the sequence is YLVAFHLFFVMFVWSYWMTIF. Topologically, residues 75–169 are cytoplasmic; that stretch reads TSPASPSKEF…NNCVGFSNYK (95 aa). The DHHC domain maps to 126–176; sequence RYCEKCQLIKPDRAHHCSACDSCILKMDHHCPWVNNCVGFSNYKFFLLFLL. 2 residues coordinate Zn(2+): Cys-128 and Cys-131. Residues Lys-135 and 140–143 contribute to the substrate site; that span reads HHCS. 5 residues coordinate Zn(2+): His-141, Cys-142, Cys-145, Cys-148, and His-155. Residue Cys-156 is the S-palmitoyl cysteine intermediate of the active site. Cys-162 serves as a coordination point for Zn(2+). Residues 170–190 form a helical membrane-spanning segment; the sequence is FFLLFLLYSLLYCLFVAATVL. At 191–207 the chain is on the lumenal side; it reads EYFIKFWTNELTDTRAK. The chain crosses the membrane as a helical span at residues 208–231; sequence FHVLFLFFVSAMFFISVLSLFSYH. Residues 232 to 365 lie on the Cytoplasmic side of the membrane; it reads CWLVGKNRTT…NNHVTVAIEN (134 aa). Residues Ser-305, Ser-330, and Ser-339 each carry the phosphoserine modification.

Belongs to the DHHC palmitoyltransferase family. In terms of processing, autopalmitoylated (in vitro).

It localises to the golgi apparatus membrane. The protein resides in the cell membrane. Its subcellular location is the cytoplasm. The protein localises to the perinuclear region. It is found in the endoplasmic reticulum membrane. It localises to the endoplasmic reticulum-Golgi intermediate compartment membrane. It catalyses the reaction L-cysteinyl-[protein] + hexadecanoyl-CoA = S-hexadecanoyl-L-cysteinyl-[protein] + CoA. The enzyme catalyses L-cysteinyl-[protein] + tetradecanoyl-CoA = S-tetradecanoyl-L-cysteinyl-[protein] + CoA. It carries out the reaction L-cysteinyl-[protein] + octadecanoyl-CoA = S-octadecanoyl-L-cysteinyl-[protein] + CoA. Palmitoyltransferase that could catalyze the addition of palmitate onto various protein substrates. Catalyzes palmitoylation of Cys residues in the cytoplasmic C-terminus of EGFR, and modulates the duration of EGFR signaling by modulating palmitoylation-dependent EGFR internalization and degradation. Has a preference for acyl-CoA with C16 fatty acid chains. Can also utilize acyl-CoA with C14 and C18 fatty acid chains. May palmitoylate CALHM1 subunit of gustatory voltage-gated ion channels and modulate channel gating and kinetics. Functionally, (Microbial infection) Dominant palmitoyltransferase responsible for lipidation of SARS coronavirus-2/SARS-CoV-2 spike protein. Through a sequential action with ZDHHC9, rapidly and efficiently palmitoylates spike protein following its synthesis in the endoplasmic reticulum (ER). In the infected cell, promotes spike biogenesis by protecting it from premature ER degradation, increases half-life and controls the lipid organization of its immediate membrane environment. Once the virus has formed, spike palmitoylation controls fusion with the target cell. This is Palmitoyltransferase ZDHHC20 from Homo sapiens (Human).